The following is a 318-amino-acid chain: MLHHHCRRNPELQEELQIQAAVAAGDVHTVRKMLEQGYSPNGRDANGWTLLHFSAARGKERCVRVFLEHGADPTVKDLIGGFTALHYAAMHGRARIARLMLESEYRSDIINAKSNDGWTPLHVAAHYGRDSFVRLLLEFKAEVDPLSDKGTTPLQLAIIRERSSCVKILLDHNANIDIQNGFLLRYAVIKSNHSYCRMFLQRGADTNLGRLEDGQTPLHLSALRDDVLCARMLYNYGADTNTRNYEGQTPLAVSISISGSSRPCLDFLQDVTRQPRTLQDLCRIKIRQCIGLQNLKLLDELPIAKVMKDYLKHKFDDI.

ANK repeat units follow at residues 13 to 42 (QEEL…SPNG), 46 to 75 (NGWT…DPTV), 80 to 109 (GGFT…RSDI), 116 to 145 (DGWT…EVDP), 149 to 178 (KGTT…NIDI), 180 to 208 (NGFL…DTNL), and 213 to 242 (DGQT…DTNT). The region spanning 265–318 (LDFLQDVTRQPRTLQDLCRIKIRQCIGLQNLKLLDELPIAKVMKDYLKHKFDDI) is the SOCS box domain.

The protein belongs to the ankyrin SOCS box (ASB) family. In terms of assembly, interacts with CUL5. Interacts with RNF7. Interacts with PSRC1.

Its subcellular location is the nucleus. It localises to the cytoplasm. It participates in protein modification; protein ubiquitination. Functionally, probable substrate-recognition component of a SCF-like ECS (Elongin-Cullin-SOCS-box protein) E3 ubiquitin-protein ligase complex which mediates the ubiquitination and subsequent proteasomal degradation of target proteins. Plays a role in spindle dynamics and genome integrity by targeting the mitotic progression protein PSRC1 for proteasomal degradation in a cell cycle-dependent manner. Also participates in meiosis by mediating the proper attachment between kinetochores and microtubules. This chain is Ankyrin repeat and SOCS box protein 7 (Asb7), found in Mus musculus (Mouse).